The chain runs to 156 residues: MSRRSTAEKETAKSDPIYRNRLVNMLVNRILRHGKKSLAYRIIYRAMKNIQQKTEKNPLSVLRQAIRGVTPNVTVKTRRVGGSTYQVPIEIRSTQAKALAIRWLLGASRKRPPGRNMAFKLSYELMDAARENGNAIRKKEETHRMAEANRAFAHFR.

This sequence belongs to the universal ribosomal protein uS7 family. In terms of assembly, part of the 30S ribosomal subunit.

It is found in the plastid. The protein resides in the chloroplast. Functionally, one of the primary rRNA binding proteins, it binds directly to 16S rRNA where it nucleates assembly of the head domain of the 30S subunit. The chain is Small ribosomal subunit protein uS7c (rps7) from Stangeria eriopus (Natal grass cycad).